Consider the following 123-residue polypeptide: Ragulator complex protein LAMTOR3-B (123 aa).

The protein belongs to the LAMTOR3 family. Part of the Ragulator complex composed of lamtor1, lamtor2, lamtor3, lamtor4 and lamtor5. The Ragulator complex interacts with slc38a9; the probable amino acid sensor. Component of the lysosomal folliculin complex (LFC).

The protein resides in the late endosome membrane. Its function is as follows. As part of the Ragulator complex it is involved in amino acid sensing and activation of mTORC1, a signaling complex promoting cell growth in response to growth factors, energy levels, and amino acids. Activated by amino acids through a mechanism involving the lysosomal V-ATPase, the Ragulator plays a dual role for the small GTPases Rag (RagA/RRAGA, RagB/RRAGB, RagC/RRAGC and/or RagD/RRAGD): it (1) acts as a guanine nucleotide exchange factor (GEF), activating the small GTPases Rag and (2) mediates recruitment of Rag GTPases to the lysosome membrane. Activated Ragulator and Rag GTPases function as a scaffold recruiting mTORC1 to lysosomes where it is in turn activated. The polypeptide is Ragulator complex protein LAMTOR3-B (lamtor3-b) (Xenopus laevis (African clawed frog)).